Here is a 249-residue protein sequence, read N- to C-terminus: 3-deoxy-D-manno-octulosonic acid kinase (249 aa).

The active site involves D175.

It belongs to the protein kinase superfamily. KdkA/RfaP family.

The protein resides in the cell inner membrane. The enzyme catalyses an alpha-Kdo-(2-&gt;6)-lipid IVA + ATP = a 4-O-phospho-alpha-Kdo-(2-&gt;6)-lipid IVA + ADP + H(+). It functions in the pathway bacterial outer membrane biogenesis; LPS core biosynthesis. Functionally, catalyzes the ATP-dependent phosphorylation of the 3-deoxy-D-manno-octulosonic acid (Kdo) residue in Kdo-lipid IV(A) at the 4-OH position. This is 3-deoxy-D-manno-octulosonic acid kinase from Stenotrophomonas maltophilia (strain K279a).